The sequence spans 407 residues: Myeloid cell nuclear differentiation antigen (407 aa).

In terms of domain architecture, Pyrin spans Met-1–Lys-88. The interval Glu-108 to Pro-207 is disordered. The short motif at Pro-131 to Lys-137 is the Nuclear localization signal element. Over residues Pro-139–Arg-148 the composition is skewed to basic and acidic residues. Residues Gln-177–Pro-190 show a composition bias toward low complexity. The HIN-200 domain maps to Ala-196–Ile-394.

In terms of assembly, participates in a ternary complex with YY1 and the YY1 target DNA element. Binds nucleolin and nucleophosmin/NPM/B23. As to expression, expressed constitutively in cells of the myeloid lineage. Found in promyelocyte stage cells as well as in all other stage cells including peripheral blood monocytes and granulocytes. Also appears in myeloblast cells in some cases of acute myeloid Leukemia.

The protein localises to the nucleus. The protein resides in the cytoplasm. Its function is as follows. May act as a transcriptional activator/repressor in the myeloid lineage. Plays a role in the granulocyte/monocyte cell-specific response to interferon. Stimulates the DNA binding of the transcriptional repressor protein YY1. The polypeptide is Myeloid cell nuclear differentiation antigen (MNDA) (Homo sapiens (Human)).